The chain runs to 616 residues: Chaperone protein HtpG (616 aa).

The a; substrate-binding stretch occupies residues 1 to 334 (MAEKQIHTFQ…TADLPLNVSR (334 aa)). The interval 335–549 (EILQGNKVVD…ENEMGGNMER (215 aa)) is b. The c stretch occupies residues 550–616 (IMKSLGQDVP…FVKRINKLIN (67 aa)).

This sequence belongs to the heat shock protein 90 family. As to quaternary structure, homodimer.

The protein resides in the cytoplasm. In terms of biological role, molecular chaperone. Has ATPase activity. This is Chaperone protein HtpG from Ruthia magnifica subsp. Calyptogena magnifica.